A 457-amino-acid polypeptide reads, in one-letter code: Argininosuccinate lyase (457 aa).

It belongs to the lyase 1 family. Argininosuccinate lyase subfamily.

The protein resides in the cytoplasm. It carries out the reaction 2-(N(omega)-L-arginino)succinate = fumarate + L-arginine. It functions in the pathway amino-acid biosynthesis; L-arginine biosynthesis; L-arginine from L-ornithine and carbamoyl phosphate: step 3/3. This chain is Argininosuccinate lyase, found in Escherichia fergusonii (strain ATCC 35469 / DSM 13698 / CCUG 18766 / IAM 14443 / JCM 21226 / LMG 7866 / NBRC 102419 / NCTC 12128 / CDC 0568-73).